The following is a 239-amino-acid chain: Ribosomal RNA small subunit methyltransferase G (239 aa).

S-adenosyl-L-methionine is bound by residues G78, F83, 129–130 (AE), and R148.

This sequence belongs to the methyltransferase superfamily. RNA methyltransferase RsmG family.

Its subcellular location is the cytoplasm. Functionally, specifically methylates the N7 position of a guanine in 16S rRNA. This Clostridium botulinum (strain 657 / Type Ba4) protein is Ribosomal RNA small subunit methyltransferase G.